We begin with the raw amino-acid sequence, 427 residues long: 3-phosphoshikimate 1-carboxyvinyltransferase (427 aa).

Residues K22, S23, and R27 each coordinate 3-phosphoshikimate. K22 contacts phosphoenolpyruvate. Residues G96 and R124 each contribute to the phosphoenolpyruvate site. 3-phosphoshikimate contacts are provided by S169, S170, Q171, S197, D313, N336, and K340. Q171 is a binding site for phosphoenolpyruvate. The active-site Proton acceptor is the D313. The phosphoenolpyruvate site is built by R344, R386, and K411.

The protein belongs to the EPSP synthase family. In terms of assembly, monomer.

The protein localises to the cytoplasm. The enzyme catalyses 3-phosphoshikimate + phosphoenolpyruvate = 5-O-(1-carboxyvinyl)-3-phosphoshikimate + phosphate. Its pathway is metabolic intermediate biosynthesis; chorismate biosynthesis; chorismate from D-erythrose 4-phosphate and phosphoenolpyruvate: step 6/7. In terms of biological role, catalyzes the transfer of the enolpyruvyl moiety of phosphoenolpyruvate (PEP) to the 5-hydroxyl of shikimate-3-phosphate (S3P) to produce enolpyruvyl shikimate-3-phosphate and inorganic phosphate. The protein is 3-phosphoshikimate 1-carboxyvinyltransferase of Klebsiella pneumoniae (strain 342).